The sequence spans 461 residues: Protein transport protein HofB homolog (461 aa).

222-229 (GPTGSGKT) is an ATP binding site.

This sequence belongs to the GSP E family.

The protein is Protein transport protein HofB homolog (hofB) of Escherichia coli (strain K12).